The chain runs to 146 residues: Large ribosomal subunit protein uL15 (146 aa).

Basic and acidic residues predominate over residues 1-13 (MKLHELKPAEGSR). Positions 1 to 51 (MKLHELKPAEGSRKVRNRVGRGIGSGNGKTAGKGHKGQNARSGGGVRLGFE) are disordered. Gly residues-rich tracts occupy residues 21 to 31 (RGIGSGNGKTA) and 42 to 51 (SGGGVRLGFE).

It belongs to the universal ribosomal protein uL15 family. Part of the 50S ribosomal subunit.

Binds to the 23S rRNA. The polypeptide is Large ribosomal subunit protein uL15 (Bacillus cereus (strain G9842)).